A 285-amino-acid polypeptide reads, in one-letter code: Bifunctional protein FolD (285 aa).

NADP(+) is bound by residues 166–168 (GAS) and isoleucine 232.

The protein belongs to the tetrahydrofolate dehydrogenase/cyclohydrolase family. Homodimer.

The catalysed reaction is (6R)-5,10-methylene-5,6,7,8-tetrahydrofolate + NADP(+) = (6R)-5,10-methenyltetrahydrofolate + NADPH. It catalyses the reaction (6R)-5,10-methenyltetrahydrofolate + H2O = (6R)-10-formyltetrahydrofolate + H(+). It functions in the pathway one-carbon metabolism; tetrahydrofolate interconversion. Its function is as follows. Catalyzes the oxidation of 5,10-methylenetetrahydrofolate to 5,10-methenyltetrahydrofolate and then the hydrolysis of 5,10-methenyltetrahydrofolate to 10-formyltetrahydrofolate. This chain is Bifunctional protein FolD, found in Vibrio atlanticus (strain LGP32) (Vibrio splendidus (strain Mel32)).